A 425-amino-acid chain; its full sequence is Serine--tRNA ligase (425 aa).

L-serine is bound at residue 231–233 (TAE). Residue 262–264 (RSE) participates in ATP binding. Glu-285 contributes to the L-serine binding site. 349-352 (EISS) provides a ligand contact to ATP. Residue Ser-385 coordinates L-serine.

Belongs to the class-II aminoacyl-tRNA synthetase family. Type-1 seryl-tRNA synthetase subfamily. Homodimer. The tRNA molecule binds across the dimer.

It is found in the cytoplasm. The enzyme catalyses tRNA(Ser) + L-serine + ATP = L-seryl-tRNA(Ser) + AMP + diphosphate + H(+). The catalysed reaction is tRNA(Sec) + L-serine + ATP = L-seryl-tRNA(Sec) + AMP + diphosphate + H(+). It functions in the pathway aminoacyl-tRNA biosynthesis; selenocysteinyl-tRNA(Sec) biosynthesis; L-seryl-tRNA(Sec) from L-serine and tRNA(Sec): step 1/1. In terms of biological role, catalyzes the attachment of serine to tRNA(Ser). Is also able to aminoacylate tRNA(Sec) with serine, to form the misacylated tRNA L-seryl-tRNA(Sec), which will be further converted into selenocysteinyl-tRNA(Sec). The chain is Serine--tRNA ligase from Bartonella henselae (strain ATCC 49882 / DSM 28221 / CCUG 30454 / Houston 1) (Rochalimaea henselae).